Consider the following 293-residue polypeptide: Pyridoxal 5'-phosphate synthase subunit PdxS (293 aa).

Asp23 provides a ligand contact to D-ribose 5-phosphate. Lys80 (schiff-base intermediate with D-ribose 5-phosphate) is an active-site residue. A D-ribose 5-phosphate-binding site is contributed by Gly152. Residue Arg164 participates in D-glyceraldehyde 3-phosphate binding. Residues Gly213 and 234 to 235 (GS) each bind D-ribose 5-phosphate.

Belongs to the PdxS/SNZ family. In the presence of PdxT, forms a dodecamer of heterodimers.

The catalysed reaction is aldehydo-D-ribose 5-phosphate + D-glyceraldehyde 3-phosphate + L-glutamine = pyridoxal 5'-phosphate + L-glutamate + phosphate + 3 H2O + H(+). It participates in cofactor biosynthesis; pyridoxal 5'-phosphate biosynthesis. In terms of biological role, catalyzes the formation of pyridoxal 5'-phosphate from ribose 5-phosphate (RBP), glyceraldehyde 3-phosphate (G3P) and ammonia. The ammonia is provided by the PdxT subunit. Can also use ribulose 5-phosphate and dihydroxyacetone phosphate as substrates, resulting from enzyme-catalyzed isomerization of RBP and G3P, respectively. The sequence is that of Pyridoxal 5'-phosphate synthase subunit PdxS from Dehalococcoides mccartyi (strain ATCC BAA-2266 / KCTC 15142 / 195) (Dehalococcoides ethenogenes (strain 195)).